A 64-amino-acid polypeptide reads, in one-letter code: uncharacterized protein (64 aa).

This is an uncharacterized protein from Sulfolobus islandicus rod-shaped virus 1 (SIRV-1).